The primary structure comprises 150 residues: Monooxygenase dmxR10 (150 aa).

The protein belongs to the avfA family.

Its pathway is secondary metabolite biosynthesis. In terms of biological role, monooxygenase; part of the gene cluster that mediates the biosynthesis of the dimeric xanthones cryptosporioptides. The pathway begins with the synthesis of atrochrysone thioester by the polyketide synthase dmx-nrPKS. The atrochrysone carboxyl ACP thioesterase dmxR1 then breaks the thioester bond and releases the atrochrysone carboxylic acid from dmx-nrPKS. Atrochrysone carboxylic acid is decarboxylated by the decarboxylase dmxR15, and oxidized by the anthrone oxygenase dmxR16 to yield emodin. Emodin is then reduced to emodin hydroquinone by the oxidoreductase dmxR7. A-ring reduction by the short chain dehydrogenase dmxR18, dehydration by the scytalone dehydratase-like protein dmxR17 and probable spontaneous re-oxidation, results in overall deoxygenation to chrysophanol. Baeyer-Villiger oxidation by the Baeyer-Villiger monooxygenase (BVMO) dmxR6 then yields monodictylactone in equilibrium with monodictyphenone. In the case of the cryptosporioptides biosynthesis, monodictylactone is reduced at C-12 to an alcohol (by the short chain dehydrogenases dmxR12 or dmxR8) and hydroxylated at C-5 by dmxR9, yielding the electron-rich aromatic which could eliminate H(2)O to form the ortho-quinonemethide, followed by tautomerisation to paraquinone and complete the formal reduction to produce the 10-methylgroup. Conjugate addition of C-4a-OH to the resulting paraquinone by the monooxygenase dmxR10 then gives cyclohexadienone, which is then reduced at C-5 by the short chain dehydrogenase dmxR3 to give the dihydroxanthone. The 6,7-epoxide in the cryptosporioptides could be introduced by the cytochrome P450 monooxygenase dmxL3. The highly reducing PKS dmxL2 manufactures butyrate, which is further carboxylated by dmxL1 to form ethylmalonate. It is not yet clear whether the carboxylation occurs while the butyrate is attached to the ACP of dmxL2, but this unusual fungal metabolite could then be esterified to O-5 by the O-acetyltransferase dmxR13. Finally, dimerization performed by dmxR5 gives the observed dimers cryptosporioptides A, B and C as the final products of the pathway. The chain is Monooxygenase dmxR10 from Cryptosporiopsis sp. (strain 8999).